We begin with the raw amino-acid sequence, 174 residues long: Male-enhanced antigen 1 (174 aa).

Disordered regions lie at residues 1–83 (MAAV…DGAA) and 95–123 (HLPDPPLESEDEDEEGAAALSSHSSIPMD). 3 stretches are compositionally biased toward acidic residues: residues 38–48 (SSEEPEEEQEE), 65–82 (PEQEEVELAPVGEGEDGA), and 101–110 (LESEDEDEEG). Ser-103 carries the post-translational modification Phosphoserine.

Highly expressed in testis. Transcripts can be found in primary and secondary spermatocytes, and spermatids, but the protein itself is only detected in spermatids. No expression in Leydig cells, spermatogonia, or sperm. Very weak expression in the heart, kidney, spleen, thymus and ovary.

May play an important role in spermatogenesis and/or testis development. The protein is Male-enhanced antigen 1 (Mea1) of Mus musculus (Mouse).